The following is a 324-amino-acid chain: MLEQVILFTIIMGFLISVLISPILIPFLRRLKFGQSIREEGPKSHMKKSGTPTMGGVMIIVSIAITAIVMTQKFSHLSAEMFLLLFVTIGYGLLGFLDDYIKVVMKRNLGLTSKQKLIGQIIIAIVFYGVYHYCHFSTGIRVPGTHLSIDLGWGYFILVLFMLVGGSNAVNLTDGLDGLLSGTAAIAFGAFAILAWNQSQYDVAIFSVAVVGAVLGFLVFNAHPAKVFMGDTGSLALGGAIVTVAILTKLEILLVIIGGVFVIETLSVILQVISFKTTGKRIFKMSPLHHHYELVGWSEWRVVVTFWTAGLLLAVLGIYIEVWL.

10 helical membrane passes run 5 to 25 (VILF…PILI), 50 to 70 (GTPT…AIVM), 77 to 97 (LSAE…LGFL), 117 to 137 (LIGQ…CHFS), 147 to 167 (LSID…VGGS), 176 to 196 (LDGL…ILAW), 203 to 223 (VAIF…FNAH), 227 to 247 (VFMG…VAIL), 250 to 270 (LEIL…SVIL), and 302 to 322 (VVVT…YIEV).

The protein belongs to the glycosyltransferase 4 family. MraY subfamily. Mg(2+) serves as cofactor.

It localises to the cell membrane. The enzyme catalyses UDP-N-acetyl-alpha-D-muramoyl-L-alanyl-gamma-D-glutamyl-meso-2,6-diaminopimeloyl-D-alanyl-D-alanine + di-trans,octa-cis-undecaprenyl phosphate = di-trans,octa-cis-undecaprenyl diphospho-N-acetyl-alpha-D-muramoyl-L-alanyl-D-glutamyl-meso-2,6-diaminopimeloyl-D-alanyl-D-alanine + UMP. It participates in cell wall biogenesis; peptidoglycan biosynthesis. Functionally, catalyzes the initial step of the lipid cycle reactions in the biosynthesis of the cell wall peptidoglycan: transfers peptidoglycan precursor phospho-MurNAc-pentapeptide from UDP-MurNAc-pentapeptide onto the lipid carrier undecaprenyl phosphate, yielding undecaprenyl-pyrophosphoryl-MurNAc-pentapeptide, known as lipid I. In Bacillus velezensis (strain DSM 23117 / BGSC 10A6 / LMG 26770 / FZB42) (Bacillus amyloliquefaciens subsp. plantarum), this protein is Phospho-N-acetylmuramoyl-pentapeptide-transferase.